An 832-amino-acid polypeptide reads, in one-letter code: SID1 transmembrane family member 2 (832 aa).

The first 18 residues, methionine 1–serine 18, serve as a signal peptide directing secretion. At histidine 19–tyrosine 293 the chain is on the extracellular side. N-linked (GlcNAc...) asparagine glycosylation is found at asparagine 27, asparagine 54, asparagine 60, asparagine 123, asparagine 141, and asparagine 165. A helical membrane pass occupies residues valine 294–leucine 314. The Cytoplasmic portion of the chain corresponds to alanine 315–glutamine 447. Phosphoserine is present on residues serine 401, serine 403, and serine 404. Residues isoleucine 448 to valine 468 form a helical membrane-spanning segment. The Extracellular portion of the chain corresponds to isoleucine 469–alanine 499. N-linked (GlcNAc...) asparagine glycosylation is found at asparagine 476 and asparagine 496. A helical transmembrane segment spans residues phenylalanine 500–isoleucine 520. The Cytoplasmic portion of the chain corresponds to leucine 521–histidine 546. A helical transmembrane segment spans residues phenylalanine 547 to tyrosine 567. At histidine 568 to serine 605 the chain is on the extracellular side. N-linked (GlcNAc...) asparagine glycosylation is found at asparagine 572 and asparagine 603. A helical membrane pass occupies residues alanine 606 to phenylalanine 626. At glycine 627–threonine 631 the chain is on the cytoplasmic side. A helical transmembrane segment spans residues alanine 632–leucine 652. Over tyrosine 653 to arginine 688 the chain is Extracellular. The helical transmembrane segment at methionine 689–methionine 709 threads the bilayer. Over arginine 710–alanine 715 the chain is Cytoplasmic. A helical membrane pass occupies residues serine 716–methionine 736. The Extracellular portion of the chain corresponds to lysine 737–leucine 746. Residues isoleucine 747–phenylalanine 767 form a helical membrane-spanning segment. Residues glutamine 768 to histidine 796 lie on the Cytoplasmic side of the membrane. A helical transmembrane segment spans residues aspartate 797 to leucine 817. Topologically, residues aspartate 818–phenylalanine 832 are extracellular.

This sequence belongs to the SID1 family. As to quaternary structure, interacts with adapter protein complex 1 (AP-1) and AP-2, but not AP-3 and AP-4. Interacts with LAMP2. Post-translationally, glycosylated. In terms of tissue distribution, widely expressed, including in the liver, brain and kidney (at protein level).

Its subcellular location is the lysosome membrane. The protein localises to the cell membrane. Functionally, mediates the translocation of RNA and DNA across the lysosomal membrane during RNA and DNA autophagy (RDA), a process in which RNA and DNA is directly imported into lysosomes in an ATP-dependent manner, and degraded. Involved in the uptake of single-stranded oligonucleotides by living cells, a process called gymnosis. In vitro, mediates the uptake of linear DNA more efficiently than that of circular DNA, but exhibits similar uptake efficacy toward RNA and DNA. Binds long double-stranded RNA (dsRNA) (500 - 700 base pairs), but not dsRNA shorter than 100 bp. The chain is SID1 transmembrane family member 2 (Sidt2) from Mus musculus (Mouse).